The primary structure comprises 338 residues: Activator of 90 kDa heat shock protein ATPase homolog 1 (338 aa).

Lys-3 bears the N6-acetyllysine mark. Lys-182 participates in a covalent cross-link: Glycyl lysine isopeptide (Lys-Gly) (interchain with G-Cter in SUMO1). Ser-193 is subject to Phosphoserine. Lys-203 participates in a covalent cross-link: Glycyl lysine isopeptide (Lys-Gly) (interchain with G-Cter in SUMO2). The residue at position 212 (Lys-212) is an N6-acetyllysine. A Phosphotyrosine; by ABL modification is found at Tyr-223. Phosphoserine is present on Ser-258.

It belongs to the AHA1 family. As to quaternary structure, interacts with HSPCA/HSP90. Interacts (phosphorylated on Tyr-223) with HSP90AA1; the interaction activates HSP90AA1 ATPase activity. Interacts with HSP90AB1. Interacts with GCH1. Interacts with SRPK1. Interacts with FLCN. In terms of assembly, (Microbial infection) Interacts with vesicular stomatitis virus glycoprotein (VSV G) (via cytoplasmic tail). Post-translationally, phosphorylation at Tyr-223 enhances binding to chaperone HSP90AA1. Expressed in numerous tissues, including brain, heart, skeletal muscle and kidney and, at lower levels, liver and placenta.

It localises to the cytoplasm. It is found in the cytosol. The protein resides in the endoplasmic reticulum. Acts as a co-chaperone of HSP90AA1. Activates the ATPase activity of HSP90AA1 leading to increase in its chaperone activity. Competes with the inhibitory co-chaperone FNIP1 for binding to HSP90AA1, thereby providing a reciprocal regulatory mechanism for chaperoning of client proteins. Competes with the inhibitory co-chaperone TSC1 for binding to HSP90AA1, thereby providing a reciprocal regulatory mechanism for chaperoning of client proteins. The polypeptide is Activator of 90 kDa heat shock protein ATPase homolog 1 (AHSA1) (Homo sapiens (Human)).